Consider the following 460-residue polypeptide: Probable glucan endo-1,3-beta-glucosidase eglC (460 aa).

Positions 1–18 (MQLAQLAAFAMTLATSEA) are cleaved as a signal peptide. Glutamate 128 acts as the Proton donor in catalysis. A glycan (N-linked (GlcNAc...) asparagine) is linked at asparagine 183. The active-site Nucleophile is the glutamate 239. N-linked (GlcNAc...) asparagine glycans are attached at residues asparagine 312, asparagine 367, and asparagine 373. Positions 379–437 (RPSGSASARPSAGAISSGSGSSSSGSGSSGSTGTSATSGQSSSSGSSAAAGSSSPAAFS) are disordered. Residues 380–437 (PSGSASARPSAGAISSGSGSSSSGSGSSGSTGTSATSGQSSSSGSSAAAGSSSPAAFS) show a composition bias toward low complexity. The GPI-anchor amidated serine moiety is linked to residue serine 430. The propeptide at 431–460 (SSPAAFSGASTLSGSLFGAVVAVFMTLAAL) is removed in mature form.

Belongs to the glycosyl hydrolase 17 family. The GPI-anchor is attached to the protein in the endoplasmic reticulum and serves to target the protein to the cell surface. There, the glucosamine-inositol phospholipid moiety is cleaved off and the GPI-modified mannoprotein is covalently attached via its lipidless GPI glycan remnant to the 1,6-beta-glucan of the outer cell wall layer.

It localises to the cell membrane. The protein localises to the secreted. The protein resides in the cell wall. The catalysed reaction is Hydrolysis of (1-&gt;3)-beta-D-glucosidic linkages in (1-&gt;3)-beta-D-glucans.. In terms of biological role, glucanases play a role in cell expansion during growth, in cell-cell fusion during mating, and in spore release during sporulation. This enzyme may be involved in beta-glucan degradation and also function biosynthetically as a transglycosylase. The polypeptide is Probable glucan endo-1,3-beta-glucosidase eglC (eglC) (Aspergillus niger (strain ATCC MYA-4892 / CBS 513.88 / FGSC A1513)).